The chain runs to 206 residues: Protein-methionine-sulfoxide reductase heme-binding subunit MsrQ (206 aa).

Transmembrane regions (helical) follow at residues 14–34, 45–65, 82–102, 118–138, 149–169, and 179–199; these read IKPLLFVAGLLPFARWFWLGA, FLTRSSGTWTLVCLLVTLAIT, MCGLFAFFYGSLHFLAWVWWD, PFITVGFAAFVLMAALAATST, WQTLHRAVYAIGLLAILHFWW, and QPLLYGSVLALLLGWRVAAWW.

It belongs to the MsrQ family. In terms of assembly, heterodimer of a catalytic subunit (MsrP) and a heme-binding subunit (MsrQ). It depends on FMN as a cofactor. The cofactor is heme b.

The protein resides in the cell inner membrane. In terms of biological role, part of the MsrPQ system that repairs oxidized periplasmic proteins containing methionine sulfoxide residues (Met-O), using respiratory chain electrons. Thus protects these proteins from oxidative-stress damage caused by reactive species of oxygen and chlorine generated by the host defense mechanisms. MsrPQ is essential for the maintenance of envelope integrity under bleach stress, rescuing a wide series of structurally unrelated periplasmic proteins from methionine oxidation. MsrQ provides electrons for reduction to the reductase catalytic subunit MsrP, using the quinone pool of the respiratory chain. The polypeptide is Protein-methionine-sulfoxide reductase heme-binding subunit MsrQ (Bordetella pertussis (strain Tohama I / ATCC BAA-589 / NCTC 13251)).